Consider the following 138-residue polypeptide: Basic phospholipase A2 sistruxin B (138 aa).

Residues 1 to 16 form the signal peptide; it reads MRALWIVAVLLVGVEG. 7 disulfide bridges follow: cysteine 42/cysteine 131, cysteine 44/cysteine 60, cysteine 59/cysteine 111, cysteine 65/cysteine 138, cysteine 66/cysteine 104, cysteine 73/cysteine 97, and cysteine 91/cysteine 102. Residues tyrosine 43, glycine 45, and glycine 47 each contribute to the Ca(2+) site. The active site involves histidine 63. Aspartate 64 is a Ca(2+) binding site. Residue aspartate 105 is part of the active site.

As to quaternary structure, heterodimer of an acidic subunit and a basic chain. The acidic subunit is non-toxic, without enzymatic activity and comprises 3 peptides that are cross-linked by 7 disulfide bridges. The basic subunit is toxic, has phospholipase A2 activity and is composed of a single chain. Ca(2+) serves as cofactor. As to expression, expressed by the venom gland.

It is found in the secreted. The catalysed reaction is a 1,2-diacyl-sn-glycero-3-phosphocholine + H2O = a 1-acyl-sn-glycero-3-phosphocholine + a fatty acid + H(+). Its function is as follows. Snake venom phospholipase A2 (PLA2) that shows presynaptic neurotoxicity. PLA2 catalyzes the calcium-dependent hydrolysis of the 2-acyl groups in 3-sn-phosphoglycerides. The sequence is that of Basic phospholipase A2 sistruxin B from Sistrurus tergeminus (Western massasauga).